We begin with the raw amino-acid sequence, 384 residues long: MKALVIGGGIGGLSAAVGLKNAGIHCEVFEAVKEIKPVGAAISIWPNGVKCMKHLGMGDIIESYGGPMHFLAYKDYLRGEDLTQFSLAPLVERTGGRPCPVPALNLQREMLDFWGRDAVQFGKRVTRCEEHADGVRVWFTDGSMAEGDFLIAADGSHSALRPYVLGYTPERRYAGYVNWNGLVEIDEAIAPGNQWTTFVGEGKRVSLMPVSDGRFYFFFDVPLPAGLAEDRSTLRADLSRYFSGWAPQVQKLIAALDPQTTNRIEIHDIEPFERLVRGKVALLGDAGHSTTPDIGQGGCAALEDAVVLGDLFRESRDIAGVLRQYEAQRCDRVRDLVLKARKRCDVTHGKDMALTQAWYQELETETGERIINGLCETIQGGPLG.

FAD is bound by residues Gly-11, 30 to 31, Ser-43, and Val-125; that span reads EA. Substrate contacts are provided by residues Asn-178, Arg-204, and 216–218; that span reads YFF. FAD-binding positions include Asp-285 and 295–299; that span reads GQGGC.

Belongs to the FAD-dependent urate hydroxylase family. FAD is required as a cofactor.

It carries out the reaction urate + NADH + O2 + H(+) = 5-hydroxyisourate + NAD(+) + H2O. Its pathway is purine metabolism; urate degradation. Catalyzes the hydroxylation of uric acid to 5-hydroxyisourate. The protein is FAD-dependent urate hydroxylase (hpxO) of Klebsiella oxytoca.